The chain runs to 113 residues: Large ribosomal subunit protein uL22 (113 aa).

Belongs to the universal ribosomal protein uL22 family. As to quaternary structure, part of the 50S ribosomal subunit.

Its function is as follows. This protein binds specifically to 23S rRNA; its binding is stimulated by other ribosomal proteins, e.g. L4, L17, and L20. It is important during the early stages of 50S assembly. It makes multiple contacts with different domains of the 23S rRNA in the assembled 50S subunit and ribosome. The globular domain of the protein is located near the polypeptide exit tunnel on the outside of the subunit, while an extended beta-hairpin is found that lines the wall of the exit tunnel in the center of the 70S ribosome. The chain is Large ribosomal subunit protein uL22 from Solibacter usitatus (strain Ellin6076).